We begin with the raw amino-acid sequence, 155 residues long: DNA gyrase inhibitor (155 aa).

The protein belongs to the DNA gyrase inhibitor family. Interacts with DNA gyrase.

It is found in the cytoplasm. Its function is as follows. Inhibits the supercoiling activity of DNA gyrase. Acts by inhibiting DNA gyrase at an early step, prior to (or at the step of) binding of DNA by the gyrase. It protects cells against toxins that target DNA gyrase, by inhibiting activity of these toxins and reducing the formation of lethal double-strand breaks in the cell. This chain is DNA gyrase inhibitor, found in Salmonella typhi.